The sequence spans 689 residues: Glycine--tRNA ligase beta subunit (689 aa).

The protein belongs to the class-II aminoacyl-tRNA synthetase family. In terms of assembly, tetramer of two alpha and two beta subunits.

It localises to the cytoplasm. It carries out the reaction tRNA(Gly) + glycine + ATP = glycyl-tRNA(Gly) + AMP + diphosphate. The chain is Glycine--tRNA ligase beta subunit from Shigella boydii serotype 18 (strain CDC 3083-94 / BS512).